A 451-amino-acid polypeptide reads, in one-letter code: Tubulin gamma-2 chain (451 aa).

Position 131 is a phosphoserine; by BRSK1 (S131). Position 142-148 (142-148 (AGGTGSG)) interacts with GTP.

This sequence belongs to the tubulin family. As to quaternary structure, component of the gamma-tubulin ring complex (gTuRC) consisting of TUBGCP2, TUBGCP3, TUBGCP4, TUBGCP5 and TUBGCP6 and gamma-tubulin TUBG1 or TUBG2. TUBGCP2, TUBGCP3, TUBGCP4, TUBGCP5 and TUBGCP6 assemble in a 5:5:2:1:1 stoichiometry; each is associated with a gamma-tubulin, thereby arranging 14 gamma-tubulins in a helical manner. Gamma-tubulin at the first position is blocked by TUBGCP3 at the last position, allowing 13 protafilaments to grow into a microtubule. Interacts with alpha-beta tubulin heterodimers; the interaction allows microtubules to nucleate from the gTuRC. Phosphorylation at Ser-131 by BRSK1 regulates centrosome duplication, possibly by mediating relocation of gamma-tubulin and its associated proteins from the cytoplasm to the centrosome.

The protein resides in the cytoplasm. Its subcellular location is the cytoskeleton. The protein localises to the microtubule organizing center. It is found in the centrosome. Functionally, tubulin is the major constituent of microtubules, protein filaments consisting of alpha- and beta-tubulin heterodimers. Gamma-tubulin is a key component of the gamma-tubulin ring complex (gTuRC) which mediates microtubule nucleation. The gTuRC regulates the minus-end nucleation of alpha-beta tubulin heterodimers that grow into microtubule protafilaments, a critical step in centrosome duplication and spindle formation. The polypeptide is Tubulin gamma-2 chain (TUBG2) (Bos taurus (Bovine)).